Here is a 361-residue protein sequence, read N- to C-terminus: Probable mannose-1-phosphate guanylyltransferase 3 (361 aa).

The GDP-alpha-D-mannose site is built by Leu6 and Val7. Diphosphate-binding residues include Gly9, Gly11, Thr12, Arg13, and Lys23. Residues Gly85, Asn109, Asp111, Gly146, and Asn173 each contribute to the GDP-alpha-D-mannose site.

It belongs to the transferase hexapeptide repeat family.

It catalyses the reaction alpha-D-mannose 1-phosphate + GTP + H(+) = GDP-alpha-D-mannose + diphosphate. The protein operates within nucleotide-sugar biosynthesis; GDP-alpha-D-mannose biosynthesis; GDP-alpha-D-mannose from alpha-D-mannose 1-phosphate (GTP route): step 1/1. In terms of biological role, catalyzes a reaction of the Smirnoff-Wheeler pathway, the major route to ascorbate biosynthesis in plants. The sequence is that of Probable mannose-1-phosphate guanylyltransferase 3 from Oryza sativa subsp. japonica (Rice).